A 357-amino-acid polypeptide reads, in one-letter code: Phosphoribosylformylglycinamidine cyclo-ligase (357 aa).

Belongs to the AIR synthase family.

It localises to the cytoplasm. The enzyme catalyses 2-formamido-N(1)-(5-O-phospho-beta-D-ribosyl)acetamidine + ATP = 5-amino-1-(5-phospho-beta-D-ribosyl)imidazole + ADP + phosphate + H(+). The protein operates within purine metabolism; IMP biosynthesis via de novo pathway; 5-amino-1-(5-phospho-D-ribosyl)imidazole from N(2)-formyl-N(1)-(5-phospho-D-ribosyl)glycinamide: step 2/2. The sequence is that of Phosphoribosylformylglycinamidine cyclo-ligase from Rhizobium leguminosarum bv. trifolii (strain WSM2304).